The sequence spans 593 residues: Aspartate--tRNA(Asp/Asn) ligase (593 aa).

An L-aspartate-binding site is contributed by E173. An aspartate region spans residues 197-200 (QLFK). An L-aspartate-binding site is contributed by R219. ATP-binding positions include 219–221 (RDE) and Q228. L-aspartate is bound at residue H451. E485 serves as a coordination point for ATP. Residue R492 participates in L-aspartate binding. 537–540 (GIDR) contacts ATP.

It belongs to the class-II aminoacyl-tRNA synthetase family. Type 1 subfamily. As to quaternary structure, homodimer.

The protein localises to the cytoplasm. The enzyme catalyses tRNA(Asx) + L-aspartate + ATP = L-aspartyl-tRNA(Asx) + AMP + diphosphate. Functionally, aspartyl-tRNA synthetase with relaxed tRNA specificity since it is able to aspartylate not only its cognate tRNA(Asp) but also tRNA(Asn). Reaction proceeds in two steps: L-aspartate is first activated by ATP to form Asp-AMP and then transferred to the acceptor end of tRNA(Asp/Asn). This is Aspartate--tRNA(Asp/Asn) ligase from Legionella pneumophila (strain Paris).